We begin with the raw amino-acid sequence, 269 residues long: Small ribosomal subunit protein uS2 (269 aa).

A disordered region spans residues 228 to 269 (QLDSDDDYEEFDESLAEGDYDDYDEEEDEDSETVSSQEGEEE). Residues 230–269 (DSDDDYEEFDESLAEGDYDDYDEEEDEDSETVSSQEGEEE) show a composition bias toward acidic residues.

Belongs to the universal ribosomal protein uS2 family.

The protein is Small ribosomal subunit protein uS2 of Crocosphaera subtropica (strain ATCC 51142 / BH68) (Cyanothece sp. (strain ATCC 51142)).